A 109-amino-acid chain; its full sequence is Flagellar hook-basal body complex protein FliE (109 aa).

This sequence belongs to the FliE family.

It localises to the bacterial flagellum basal body. The chain is Flagellar hook-basal body complex protein FliE from Pseudomonas aeruginosa (strain LESB58).